A 177-amino-acid chain; its full sequence is Disulfide bond formation protein B (177 aa).

At 1 to 14 (MLIFFKNLSMKRST) the chain is on the cytoplasmic side. A helical membrane pass occupies residues 15 to 31 (WILLFISALVLESTALY). Residues 32–49 (FQHGMGLNPCVMCIYERV) are Periplasmic-facing. The cysteines at positions 41 and 44 are disulfide-linked. The helical transmembrane segment at 50–65 (AILGILFSGLIGCIAP) threads the bilayer. Residues 66-72 (KWLVLRI) lie on the Cytoplasmic side of the membrane. A helical membrane pass occupies residues 73–90 (LALLIGLGSAVKGLLLAI). Residues 91-145 (KHLDYQINVYPWNQCAMVPDFPQTLPLDKWFPNIFMPSGSCSDITWSFLGFSMVQ) are Periplasmic-facing. A disulfide bridge connects residues Cys-105 and Cys-131. Residues 146-164 (WIIVIFACYFLFFIILSIS) traverse the membrane as a helical segment. At 165 to 177 (QFKKVRKNRMLFR) the chain is on the cytoplasmic side.

The protein belongs to the DsbB family.

It localises to the cell inner membrane. In terms of biological role, required for disulfide bond formation in some periplasmic proteins. Acts by oxidizing the DsbA protein. This Histophilus somni (strain 129Pt) (Haemophilus somnus) protein is Disulfide bond formation protein B.